A 244-amino-acid chain; its full sequence is HTH-type transcriptional repressor PhnF (244 aa).

The HTH gntR-type domain occupies 8-74 (RILKHQVVRA…RGRTTVVARP (67 aa)). A DNA-binding region (H-T-H motif) is located at residues 35-54 (EREIAEQFEVARETVRQALR).

Its subcellular location is the cytoplasm. Represses the phnDCE operon, involved in the uptake of phosphate, under conditions of phosphate availability in the cell. This is HTH-type transcriptional repressor PhnF (phnF) from Mycolicibacterium smegmatis (strain ATCC 700084 / mc(2)155) (Mycobacterium smegmatis).